Here is a 139-residue protein sequence, read N- to C-terminus: Probable transcription termination protein NusA (139 aa).

Residues 31-97 (DDRVVYVVTA…YNVTVSENDT (67 aa)) enclose the KH domain.

It belongs to the NusA family.

It is found in the cytoplasm. In terms of biological role, participates in transcription termination. This is Probable transcription termination protein NusA from Halobacterium salinarum (strain ATCC 29341 / DSM 671 / R1).